The following is a 372-amino-acid chain: tRNA-specific 2-thiouridylase MnmA (372 aa).

ATP contacts are provided by residues 6–13 and Leu-32; that span reads AMSGGVDS. The Nucleophile role is filled by Cys-101. A disulfide bridge links Cys-101 with Cys-193. Gly-125 serves as a coordination point for ATP. Positions 143-145 are interaction with tRNA; the sequence is KDQ. The Cysteine persulfide intermediate role is filled by Cys-193.

It belongs to the MnmA/TRMU family.

It is found in the cytoplasm. The enzyme catalyses S-sulfanyl-L-cysteinyl-[protein] + uridine(34) in tRNA + AH2 + ATP = 2-thiouridine(34) in tRNA + L-cysteinyl-[protein] + A + AMP + diphosphate + H(+). Its function is as follows. Catalyzes the 2-thiolation of uridine at the wobble position (U34) of tRNA, leading to the formation of s(2)U34. This chain is tRNA-specific 2-thiouridylase MnmA, found in Corynebacterium kroppenstedtii (strain DSM 44385 / JCM 11950 / CIP 105744 / CCUG 35717).